The primary structure comprises 221 residues: 2-amino-5-formylamino-6-ribosylaminopyrimidin-4(3H)-one 5'-monophosphate deformylase (221 aa).

Positions 29, 31, 40, and 108 each coordinate Fe cation.

The protein belongs to the creatininase superfamily. FAPy deformylase family. As to quaternary structure, homodimer. Fe(2+) serves as cofactor. Zn(2+) is required as a cofactor.

It carries out the reaction 2-amino-5-formylamino-6-(5-phospho-D-ribosylamino)pyrimidin-4(3H)-one + H2O = 2,5-diamino-6-(1-D-ribosylamino)pyrimidin-4(3H)-one 5'-phosphate + formate + H(+). The protein operates within cofactor biosynthesis; coenzyme F420 biosynthesis. It participates in cofactor biosynthesis; riboflavin biosynthesis. Functionally, catalyzes the hydrolysis of the formamide of 2-amino-5-formylamino-6-ribosylamino-4(3H)-pyrimidinone 5'-monophosphate (FAPy) to form 2,5-diamino-6-ribosylamino-4(3H)-pyrimidinone 5'-phosphate (APy). In Methanococcus maripaludis (strain C5 / ATCC BAA-1333), this protein is 2-amino-5-formylamino-6-ribosylaminopyrimidin-4(3H)-one 5'-monophosphate deformylase.